The following is a 448-amino-acid chain: Methylenetetrahydrofolate--tRNA-(uracil-5-)-methyltransferase TrmFO (448 aa).

Residue 10–15 (GAGLAG) coordinates FAD.

It belongs to the MnmG family. TrmFO subfamily. The cofactor is FAD.

Its subcellular location is the cytoplasm. It carries out the reaction uridine(54) in tRNA + (6R)-5,10-methylene-5,6,7,8-tetrahydrofolate + NADH + H(+) = 5-methyluridine(54) in tRNA + (6S)-5,6,7,8-tetrahydrofolate + NAD(+). The enzyme catalyses uridine(54) in tRNA + (6R)-5,10-methylene-5,6,7,8-tetrahydrofolate + NADPH + H(+) = 5-methyluridine(54) in tRNA + (6S)-5,6,7,8-tetrahydrofolate + NADP(+). Its function is as follows. Catalyzes the folate-dependent formation of 5-methyl-uridine at position 54 (M-5-U54) in all tRNAs. This Lactococcus lactis subsp. cremoris (strain SK11) protein is Methylenetetrahydrofolate--tRNA-(uracil-5-)-methyltransferase TrmFO.